Here is a 170-residue protein sequence, read N- to C-terminus: Large ribosomal subunit protein uL6m (170 aa).

Belongs to the universal ribosomal protein uL6 family.

It localises to the mitochondrion. The polypeptide is Large ribosomal subunit protein uL6m (mrpl6) (Dictyostelium discoideum (Social amoeba)).